We begin with the raw amino-acid sequence, 492 residues long: Aspartate aminotransferase (492 aa).

The transit peptide at 1–66 (MMSASFKCPV…KGSCCLFNIR (66 aa)) directs the protein to the chloroplast. L-aspartate contacts are provided by G119, W206, and N256. An N6-(pyridoxal phosphate)lysine modification is found at K319. Residue R458 participates in L-aspartate binding.

This sequence belongs to the class-I pyridoxal-phosphate-dependent aminotransferase family. Homodimer. Pyridoxal 5'-phosphate serves as cofactor.

It localises to the plastid. The protein resides in the chloroplast. It catalyses the reaction L-aspartate + 2-oxoglutarate = oxaloacetate + L-glutamate. Functionally, prokaryotic-type aspartate aminotransferase. Specific for aspartate and no activity with glutamine, asparagine, alanine, histidine, leucine, methionine, lysine, arginine, tryptophan, tyrosine, phenylalanine or kynurenine. This Pinus pinaster (Maritime pine) protein is Aspartate aminotransferase (AAT).